The following is a 264-amino-acid chain: Polyneuridine aldehyde esterase (264 aa).

Positions 1–6 are excised as a propeptide; it reads MHSAAN. Positions 12-122 constitute an AB hydrolase-1 domain; that stretch reads HFVLVHGGCL…MMPDPNHSLT (111 aa). Residues S87, D216, and H244 contribute to the active site. Residue S87 participates in 16-epivellosimine binding.

Belongs to the AB hydrolase superfamily. As to quaternary structure, homodimer; homodimerizes in aqueous solutions at pH 7.0. In terms of tissue distribution, mainly expressed in roots and, to a lower level, in leaves.

It carries out the reaction polyneuridine aldehyde + H2O = 16-epivellosimine + methanol + CO2. It participates in alkaloid biosynthesis; ajmaline biosynthesis. With respect to regulation, inhibited by DEPC and HgCl(2). Its function is as follows. Hydrolase involved in the biosynthesis of ajmaline-type monoterpenoid indole alkaloids (MIAs) natural products, important plant-derived pharmaceuticals used in the therapy of heart disorders. Catalyzes the hydrolysis of polyneuridine aldehyde into epi-vellosimine, precursor of vomilenine, an intermediate chemical in the biosynthesis of ajmaline. The protein is Polyneuridine aldehyde esterase of Rauvolfia serpentina (Serpentine wood).